Consider the following 364-residue polypeptide: tRNA 2-selenouridine synthase (364 aa).

The Rhodanese domain maps to 14 to 137 (LIADTPIIDV…LRQTAIQATI (124 aa)). Residue C97 is the S-selanylcysteine intermediate of the active site.

It belongs to the SelU family. As to quaternary structure, monomer.

It catalyses the reaction 5-methylaminomethyl-2-thiouridine(34) in tRNA + selenophosphate + (2E)-geranyl diphosphate + H2O + H(+) = 5-methylaminomethyl-2-selenouridine(34) in tRNA + (2E)-thiogeraniol + phosphate + diphosphate. The catalysed reaction is 5-methylaminomethyl-2-thiouridine(34) in tRNA + (2E)-geranyl diphosphate = 5-methylaminomethyl-S-(2E)-geranyl-thiouridine(34) in tRNA + diphosphate. The enzyme catalyses 5-methylaminomethyl-S-(2E)-geranyl-thiouridine(34) in tRNA + selenophosphate + H(+) = 5-methylaminomethyl-2-(Se-phospho)selenouridine(34) in tRNA + (2E)-thiogeraniol. It carries out the reaction 5-methylaminomethyl-2-(Se-phospho)selenouridine(34) in tRNA + H2O = 5-methylaminomethyl-2-selenouridine(34) in tRNA + phosphate. In terms of biological role, involved in the post-transcriptional modification of the uridine at the wobble position (U34) of tRNA(Lys), tRNA(Glu) and tRNA(Gln). Catalyzes the conversion of 2-thiouridine (S2U-RNA) to 2-selenouridine (Se2U-RNA). Acts in a two-step process involving geranylation of 2-thiouridine (S2U) to S-geranyl-2-thiouridine (geS2U) and subsequent selenation of the latter derivative to 2-selenouridine (Se2U) in the tRNA chain. The polypeptide is tRNA 2-selenouridine synthase (Escherichia coli O17:K52:H18 (strain UMN026 / ExPEC)).